A 498-amino-acid chain; its full sequence is Acetylcholine receptor subunit alpha-type acr-16 (498 aa).

Positions 1–19 are cleaved as a signal peptide; sequence MSVCTLLISCAILAAPTLG. Over 20–230 the chain is Extracellular; it reads SLQERRLYED…FYLHMRRRTL (211 aa). Residues N43 and N93 are each glycosylated (N-linked (GlcNAc...) asparagine). 2 cysteine pairs are disulfide-bonded: C147–C161 and C211–C212. Helical transmembrane passes span 231-252, 261-279, and 295-314; these read YYGFNLIMPCILTTLMTLLGFT, ITLQITVLLSICFFLSIVS, and FFTCCMIVVTASTVFTVYVL. The Cytoplasmic segment spans residues 315–472; the sequence is NLHYRTPETH…WKFAAMVVDR (158 aa). Residues 473–493 form a helical membrane-spanning segment; sequence LCLYVFTIFIIVSTIGIFWSA.

It belongs to the ligand-gated ion channel (TC 1.A.9) family. Acetylcholine receptor (TC 1.A.9.1) subfamily. As to expression, expressed in the body wall muscle.

Its subcellular location is the postsynaptic cell membrane. It is found in the cell membrane. After binding acetylcholine, the AChR responds by an extensive change in conformation that affects all subunits and leads to opening of an ion-conducting channel across the plasma membrane. A subunit of the levamisole-insensitive nicotinic receptor. The polypeptide is Acetylcholine receptor subunit alpha-type acr-16 (acr-16) (Caenorhabditis elegans).